A 648-amino-acid polypeptide reads, in one-letter code: DNA ligase (648 aa).

NAD(+)-binding positions include D30–D34, S79–M80, and E108. K110 serves as the catalytic N6-AMP-lysine intermediate. The NAD(+) site is built by R131, E165, K280, and K304. Zn(2+)-binding residues include C398, C401, C414, and C419. The BRCT domain occupies A573–L648.

Belongs to the NAD-dependent DNA ligase family. LigA subfamily. It depends on Mg(2+) as a cofactor. The cofactor is Mn(2+).

The catalysed reaction is NAD(+) + (deoxyribonucleotide)n-3'-hydroxyl + 5'-phospho-(deoxyribonucleotide)m = (deoxyribonucleotide)n+m + AMP + beta-nicotinamide D-nucleotide.. In terms of biological role, DNA ligase that catalyzes the formation of phosphodiester linkages between 5'-phosphoryl and 3'-hydroxyl groups in double-stranded DNA using NAD as a coenzyme and as the energy source for the reaction. It is essential for DNA replication and repair of damaged DNA. The sequence is that of DNA ligase from Sulfurovum sp. (strain NBC37-1).